A 125-amino-acid polypeptide reads, in one-letter code: YGINYYQHRLAVPINNQFIPYPNYAKPVAIRLHAQIPQCQALPNIDPPTVERRPRPRPSFIAIPPKKTQDKTVIPAINTVATVEPPVIPTAEPVVNTVVIAEASSEFITTSTPETTTVQITSTEI.

A disordered region spans residues 42-63 (LPNIDPPTVERRPRPRPSFIAI). The O-linked (GalNAc...) threonine glycan is linked to T97. Residue S104 is modified to Phosphoserine; alternate. The O-linked (GalNAc...) serine; alternate glycan is linked to S104. An O-linked (GalNAc...) threonine glycan is attached at T121. At S122 the chain carries Phosphoserine.

The protein belongs to the kappa-casein family. Mammary gland specific. Secreted in milk.

The protein resides in the secreted. Functionally, kappa-casein stabilizes micelle formation, preventing casein precipitation in milk. The chain is Kappa-casein (CSN3) from Lama guanicoe (Guanaco).